The sequence spans 509 residues: 3-octaprenyl-4-hydroxybenzoate carboxy-lyase (509 aa).

N179 is a Mn(2+) binding site. Prenylated FMN contacts are provided by residues I182–R184, R196–L198, and R201–G202. E245 contributes to the Mn(2+) binding site. Catalysis depends on D304, which acts as the Proton donor.

This sequence belongs to the UbiD family. In terms of assembly, homohexamer. Prenylated FMN is required as a cofactor. Mn(2+) serves as cofactor.

The protein resides in the cell membrane. The catalysed reaction is a 4-hydroxy-3-(all-trans-polyprenyl)benzoate + H(+) = a 2-(all-trans-polyprenyl)phenol + CO2. It functions in the pathway cofactor biosynthesis; ubiquinone biosynthesis. Functionally, catalyzes the decarboxylation of 3-octaprenyl-4-hydroxy benzoate to 2-octaprenylphenol, an intermediate step in ubiquinone biosynthesis. The chain is 3-octaprenyl-4-hydroxybenzoate carboxy-lyase from Cupriavidus pinatubonensis (strain JMP 134 / LMG 1197) (Cupriavidus necator (strain JMP 134)).